Reading from the N-terminus, the 580-residue chain is Proline--tRNA ligase (580 aa).

The protein belongs to the class-II aminoacyl-tRNA synthetase family. ProS type 1 subfamily. In terms of assembly, homodimer.

Its subcellular location is the cytoplasm. It catalyses the reaction tRNA(Pro) + L-proline + ATP = L-prolyl-tRNA(Pro) + AMP + diphosphate. In terms of biological role, catalyzes the attachment of proline to tRNA(Pro) in a two-step reaction: proline is first activated by ATP to form Pro-AMP and then transferred to the acceptor end of tRNA(Pro). As ProRS can inadvertently accommodate and process non-cognate amino acids such as alanine and cysteine, to avoid such errors it has two additional distinct editing activities against alanine. One activity is designated as 'pretransfer' editing and involves the tRNA(Pro)-independent hydrolysis of activated Ala-AMP. The other activity is designated 'posttransfer' editing and involves deacylation of mischarged Ala-tRNA(Pro). The misacylated Cys-tRNA(Pro) is not edited by ProRS. The sequence is that of Proline--tRNA ligase from Polynucleobacter necessarius subsp. necessarius (strain STIR1).